The primary structure comprises 218 residues: ATP phosphoribosyltransferase (218 aa).

Belongs to the ATP phosphoribosyltransferase family. Short subfamily. Heteromultimer composed of HisG and HisZ subunits.

The protein resides in the cytoplasm. The enzyme catalyses 1-(5-phospho-beta-D-ribosyl)-ATP + diphosphate = 5-phospho-alpha-D-ribose 1-diphosphate + ATP. Its pathway is amino-acid biosynthesis; L-histidine biosynthesis; L-histidine from 5-phospho-alpha-D-ribose 1-diphosphate: step 1/9. Catalyzes the condensation of ATP and 5-phosphoribose 1-diphosphate to form N'-(5'-phosphoribosyl)-ATP (PR-ATP). Has a crucial role in the pathway because the rate of histidine biosynthesis seems to be controlled primarily by regulation of HisG enzymatic activity. In Acaryochloris marina (strain MBIC 11017), this protein is ATP phosphoribosyltransferase.